The sequence spans 351 residues: Protein-glutamate methylesterase/protein-glutamine glutaminase (351 aa).

The region spanning Thr-8–Asp-125 is the Response regulatory domain. Asp-59 carries the post-translational modification 4-aspartylphosphate. Residues Pro-151–Arg-345 enclose the CheB-type methylesterase domain. Catalysis depends on residues Ser-162, His-188, and Asp-287.

It belongs to the CheB family. Phosphorylated by CheA. Phosphorylation of the N-terminal regulatory domain activates the methylesterase activity.

It is found in the cytoplasm. The enzyme catalyses [protein]-L-glutamate 5-O-methyl ester + H2O = L-glutamyl-[protein] + methanol + H(+). It catalyses the reaction L-glutaminyl-[protein] + H2O = L-glutamyl-[protein] + NH4(+). Functionally, involved in chemotaxis. Part of a chemotaxis signal transduction system that modulates chemotaxis in response to various stimuli. Catalyzes the demethylation of specific methylglutamate residues introduced into the chemoreceptors (methyl-accepting chemotaxis proteins or MCP) by CheR. Also mediates the irreversible deamidation of specific glutamine residues to glutamic acid. The chain is Protein-glutamate methylesterase/protein-glutamine glutaminase from Gluconobacter oxydans (strain 621H) (Gluconobacter suboxydans).